The chain runs to 644 residues: Leucine-rich repeat protein soc-2 homolog (644 aa).

Over residues 1–19 (MNLCSSGATASTTSLSSTG) the composition is skewed to low complexity. Disordered stretches follow at residues 1 to 60 (MNLC…APTL) and 82 to 150 (NSPA…IQAD). Gly residues-rich tracts occupy residues 26-50 (GVPG…GGKA) and 87-96 (GAGGASGFTG). A compositionally biased stretch (polar residues) spans 99–117 (QQPTGSNGHSHLHNENNAN). LRR repeat units lie at residues 164–185 (GIKR…VKEC), 187–208 (HLTE…IGCL), 210–231 (SLRN…LQNC), 233–254 (QLKV…IYRL), 256–277 (SLTT…LRQL), 279–300 (NLTM…IGAL), 302–323 (NLTT…IGNC), 325–346 (NLSA…IGNL), 348–370 (SLVR…KNCK), 371–392 (SMDE…MLAS), 395–416 (GLTT…GPAQ), 419–440 (NVYS…IFSR), 443–464 (GLTK…IGTW), 466–487 (NMVE…IMNL), 489–510 (NLEI…IGNL), 512–533 (RLRI…IGLL), 535–556 (ELQR…IGHL), 558–579 (NLTH…IGSL), 581–603 (SLEN…LALC), and 605–626 (NLKY…IQAG).

This sequence belongs to the SHOC2 family.

In terms of biological role, acts as a Ras effector and participates in MAPK pathway activation. Probably acts as a regulatory subunit of protein phosphatase that specifically dephosphorylates Raf kinase and stimulate Raf activity at specialized signaling complexes upon Ras activation. This chain is Leucine-rich repeat protein soc-2 homolog (Sur-8), found in Drosophila erecta (Fruit fly).